The primary structure comprises 311 residues: MQENQQITKKEQYNLNKLQKRLRRNVGEAIADFNMIEEGDRIMVCLSGGKDSYTMLEILRNLQQSAPINFSLVAVNLDQKQPGFPEHVLPEYLEKLGVEYKIVEENTYGIVKEKIPEGKTTCSLCSRLRRGILYRTATELGATKIALGHHRDDILQTLFLNMFYGGKMKGMPPKLMSDDGKHIVIRPLAYCREKDIQRFADAKAFPIIPCNLCGSQTNLQRQVIADMLRDWDKRYPGRIETMFSAMQNVVPSHLCDTNLFDFKGITHGSEVVNGGDLAFDREEIPLQPAGWQPEEDENQLDELRLNVVEVK.

The PP-loop motif signature appears at 47-52; the sequence is SGGKDS. [4Fe-4S] cluster-binding residues include C122, C125, and C213.

The protein belongs to the TtcA family. In terms of assembly, homodimer. The cofactor is Mg(2+). Requires [4Fe-4S] cluster as cofactor.

The protein resides in the cytoplasm. It catalyses the reaction cytidine(32) in tRNA + S-sulfanyl-L-cysteinyl-[cysteine desulfurase] + AH2 + ATP = 2-thiocytidine(32) in tRNA + L-cysteinyl-[cysteine desulfurase] + A + AMP + diphosphate + H(+). It participates in tRNA modification. In terms of biological role, catalyzes the ATP-dependent 2-thiolation of cytidine in position 32 of tRNA, to form 2-thiocytidine (s(2)C32). The sulfur atoms are provided by the cysteine/cysteine desulfurase (IscS) system. This Escherichia coli O127:H6 (strain E2348/69 / EPEC) protein is tRNA-cytidine(32) 2-sulfurtransferase.